Here is a 132-residue protein sequence, read N- to C-terminus: Small ribosomal subunit protein uS11 (132 aa).

Belongs to the universal ribosomal protein uS11 family. As to quaternary structure, part of the 30S ribosomal subunit. Interacts with proteins S7 and S18. Binds to IF-3.

Functionally, located on the platform of the 30S subunit, it bridges several disparate RNA helices of the 16S rRNA. Forms part of the Shine-Dalgarno cleft in the 70S ribosome. The polypeptide is Small ribosomal subunit protein uS11 (Chlamydia felis (strain Fe/C-56) (Chlamydophila felis)).